The primary structure comprises 418 residues: MKFIDEITLNVKAGKGGNGMIAFRREAHVDRGGPSGGDGGNGGNIYFVGDLGKNTLLHLYLQKSIVGNNGVNGGRKNLYGAAGEDKFIKVPVGTVVYEGQKVIADIVEEKPYLIAKGGRGGRGNTKFKTAKNKAPRISENGLPGESKKLTLVLKVLADVGFVGKPSAGKSTLLSVISNAKPTIADYDFTTLVPQLGLVKYFDNSFVVADLPGLIKGAHQGKGLGIRFLKHIERCKVIANVIDFGDENKNPLQDYQEIRNELKLYNLNLEEKDEVIVANKKDQECFEKKLEEFSKHYPNKKIIAISALKQENLDKLKEALWQSVKNTKDIVFELSEDEEVFINFEADFNVVHLGEGQYLVEGPKIHHFYQRIPLNTHDNLMRFNLILKKMGVWDELIKQGIQIGDSVKIYDYEFVWGNE.

The Obg domain occupies 1 to 156 (MKFIDEITLN…KKLTLVLKVL (156 aa)). The OBG-type G domain occupies 157-324 (ADVGFVGKPS…LKEALWQSVK (168 aa)). GTP is bound by residues 163–170 (GKPSAGKS), 188–192 (FTTLV), 209–212 (DLPG), 278–281 (NKKD), and 305–307 (SAL). Mg(2+) contacts are provided by serine 170 and threonine 190. The 79-residue stretch at 339 to 417 (VFINFEADFN…IYDYEFVWGN (79 aa)) folds into the OCT domain.

This sequence belongs to the TRAFAC class OBG-HflX-like GTPase superfamily. OBG GTPase family. Monomer. Requires Mg(2+) as cofactor.

It is found in the cytoplasm. In terms of biological role, an essential GTPase which binds GTP, GDP and possibly (p)ppGpp with moderate affinity, with high nucleotide exchange rates and a fairly low GTP hydrolysis rate. Plays a role in control of the cell cycle, stress response, ribosome biogenesis and in those bacteria that undergo differentiation, in morphogenesis control. This Mycoplasmopsis pulmonis (strain UAB CTIP) (Mycoplasma pulmonis) protein is GTPase Obg.